The following is a 404-amino-acid chain: MAATSDRTVYRATTTAPVNIAVIKYWGKRDASLNLPTNSSLSVTLSQRSLRTLTTASCSAIYPAADELILNGKPQDIQTSKRTLACLSNLRSLRQALENADPSLPKLSTLPLRIVSENNFPTAAGLASSAAGFAALVRAVADLYQLPQSPLELSRIARQGSGSACRSLMGGYVAWRAGEREDGSDSLAEEVAPASHWPEMRAIILVVSAEKKDVPSTEGMQTTVATSSLFATRAASVVPERMAAIETAIQNKDFATFAEITMRDSNSFHATCLDSWPPIFYMNDVSRAAVRLVHDINRAVGRTVCAYTFDAGPNAVIYYLEKDSEVVAGTIKAILGPNTEGFDGPFYDILKNVTASVVPLEKVDSRAVEILKNGISRVILTGVGEGPISVEDHLVSATGDILAS.

Residues 25-28 (YWGK), Arg-82, 161-166 (SGSACR), and Thr-217 contribute to the (R)-5-diphosphomevalonate site.

Belongs to the diphosphomevalonate decarboxylase family. Homodimer.

The enzyme catalyses (R)-5-diphosphomevalonate + ATP = isopentenyl diphosphate + ADP + phosphate + CO2. It participates in isoprenoid biosynthesis; isopentenyl diphosphate biosynthesis via mevalonate pathway; isopentenyl diphosphate from (R)-mevalonate: step 3/3. Its function is as follows. Diphosphomevalonate decarboxylase; part of the second module of ergosterol biosynthesis pathway that includes the middle steps of the pathway. Mvd1 converts diphosphomevalonate into isopentenyl diphosphate. The second module is carried out in the vacuole and involves the formation of farnesyl diphosphate, which is also an important intermediate in the biosynthesis of ubiquinone, dolichol, heme and prenylated proteins. Activity by the mevalonate kinase erg12 (AFUA_4G07780) first converts mevalonate into 5-phosphomevalonate. 5-phosphomevalonate is then further converted to 5-diphosphomevalonate by the phosphomevalonate kinase erg8 (AFUA_5G10680). The diphosphomevalonate decarboxylase mvd1 (AFUA_4G07130) then produces isopentenyl diphosphate. The isopentenyl-diphosphate delta-isomerase idi1 (AFUA_6G11160) then catalyzes the 1,3-allylic rearrangement of the homoallylic substrate isopentenyl (IPP) to its highly electrophilic allylic isomer, dimethylallyl diphosphate (DMAPP). Finally the farnesyl diphosphate synthase erg20 (AFUA_5G02450) catalyzes the sequential condensation of isopentenyl pyrophosphate with dimethylallyl pyrophosphate, and then with the resultant geranylpyrophosphate to the ultimate product farnesyl pyrophosphate. The polypeptide is Diphosphomevalonate decarboxylase mvd1 (Aspergillus fumigatus (strain ATCC MYA-4609 / CBS 101355 / FGSC A1100 / Af293) (Neosartorya fumigata)).